A 172-amino-acid chain; its full sequence is Ribosome maturation factor RimM (172 aa).

In terms of domain architecture, PRC barrel spans 93–167 (DEHEFYYHEI…RVVITPIPGM (75 aa)).

Belongs to the RimM family. In terms of assembly, binds ribosomal protein uS19.

Its subcellular location is the cytoplasm. In terms of biological role, an accessory protein needed during the final step in the assembly of 30S ribosomal subunit, possibly for assembly of the head region. Essential for efficient processing of 16S rRNA. May be needed both before and after RbfA during the maturation of 16S rRNA. It has affinity for free ribosomal 30S subunits but not for 70S ribosomes. The polypeptide is Ribosome maturation factor RimM (Exiguobacterium sp. (strain ATCC BAA-1283 / AT1b)).